The sequence spans 218 residues: Imidazole glycerol phosphate synthase subunit HisH (218 aa).

The Glutamine amidotransferase type-1 domain maps to 1-213; it reads MTTIIDYGIG…AALPTTEEAG (213 aa). Cys79 functions as the Nucleophile in the catalytic mechanism. Active-site residues include His188 and Glu190.

Heterodimer of HisH and HisF.

Its subcellular location is the cytoplasm. It carries out the reaction 5-[(5-phospho-1-deoxy-D-ribulos-1-ylimino)methylamino]-1-(5-phospho-beta-D-ribosyl)imidazole-4-carboxamide + L-glutamine = D-erythro-1-(imidazol-4-yl)glycerol 3-phosphate + 5-amino-1-(5-phospho-beta-D-ribosyl)imidazole-4-carboxamide + L-glutamate + H(+). The catalysed reaction is L-glutamine + H2O = L-glutamate + NH4(+). The protein operates within amino-acid biosynthesis; L-histidine biosynthesis; L-histidine from 5-phospho-alpha-D-ribose 1-diphosphate: step 5/9. Its function is as follows. IGPS catalyzes the conversion of PRFAR and glutamine to IGP, AICAR and glutamate. The HisH subunit catalyzes the hydrolysis of glutamine to glutamate and ammonia as part of the synthesis of IGP and AICAR. The resulting ammonia molecule is channeled to the active site of HisF. This chain is Imidazole glycerol phosphate synthase subunit HisH, found in Salinibacter ruber (strain DSM 13855 / M31).